The following is a 184-amino-acid chain: MADHLMLAEGYRLVQRPPSAAAAHGPHALRTLPPYAGPGLDSGLRPRGAPLGPPPPRQPGALAYGAFGPPSSFQPFPAVPPPAAGIAHLQPVATPYPGRAAAPPNAPGGPPGPQPAPSAAAPPPPAHALGGMDAELIDEEALTSLELELGLHRVRELPELFLGQSEFDCFSDLGSAPPAGSVSC.

Positions 18 to 28 are enriched in low complexity; that stretch reads PSAAAAHGPHA. 2 disordered regions span residues 18–67 and 94–128; these read PSAA…YGAF and TPYP…PAHA. A compositionally biased stretch (pro residues) spans 104–126; that stretch reads PNAPGGPPGPQPAPSAAAPPPPA.

It belongs to the CITED family. In terms of assembly, interacts via its C-terminal region with the CH1 domain of CREBBP and EP300. Interacts with all TFAP2/AP-2 isoforms. Expressed in most tissues examined with highest levels of expression in heart, liver, skeletal muscle and pancreas. Also expressed in bladder cell line ECV-304 and in various breast cancer cell lines. Also detected in both in situ and invasive breast tumors where its expression is down-regulated and mostly restricted to the cytoplasm of malignant epithelium. Down-regulation of expression is associated with elevated levels of HIF1A and increased tumor growth and angiogenesis.

It is found in the nucleus. The protein resides in the cytoplasm. Its function is as follows. Acts as a transcriptional coactivator for TFAP2/AP-2. Enhances estrogen-dependent transactivation mediated by estrogen receptors. May function as an inhibitor of transactivation by HIF1A by disrupting HIF1A interaction with CREBBP. May be involved in regulation of gene expression during development and differentiation of blood cells, endothelial cells and mammary epithelial cells. This is Cbp/p300-interacting transactivator 4 from Homo sapiens (Human).